The sequence spans 423 residues: Mannan endo-1,4-beta-mannosidase (423 aa).

Residues 1–27 (MKTITTARLPWAAQSFALGICLIALLG) form the signal peptide. A GH26 domain is found at 56–409 (METRSLFAFM…YADEFTAFNR (354 aa)). The substrate site is built by Glu-121, His-143, and Trp-162. Glu-212 acts as the Proton donor in catalysis. Substrate-binding residues include Trp-217 and Tyr-285. Glu-320 serves as the catalytic Nucleophile. Residues 360–361 (WR) and His-377 each bind substrate.

This sequence belongs to the glycosyl hydrolase 26 family. In terms of assembly, homodimer.

It catalyses the reaction Random hydrolysis of (1-&gt;4)-beta-D-mannosidic linkages in mannans, galactomannans and glucomannans.. In terms of biological role, catalyzes the endo hydrolysis of beta-1,4-linked mannan and galactomannan, but displays little activity towards other polysaccharides located in the plant cell wall. Preferentially hydrolyzes the larger oligosaccharides and has greater activity against non-substituted polysaccharides. It displays tight specificity for mannose at both the -2 and the -1 subsites. Appears to act in synergy with alpha-galactosidase (AgaA) to elicit hydrolysis of galactomannan. This chain is Mannan endo-1,4-beta-mannosidase, found in Cellvibrio japonicus (strain Ueda107) (Pseudomonas fluorescens subsp. cellulosa).